Consider the following 630-residue polypeptide: tRNA uridine 5-carboxymethylaminomethyl modification enzyme MnmG (630 aa).

13–18 contacts FAD; the sequence is GGGHAG. An NAD(+)-binding site is contributed by 273 to 287; it reads GPRYCPSIEDKIHRF.

Belongs to the MnmG family. As to quaternary structure, homodimer. Heterotetramer of two MnmE and two MnmG subunits. FAD serves as cofactor.

The protein resides in the cytoplasm. Its function is as follows. NAD-binding protein involved in the addition of a carboxymethylaminomethyl (cmnm) group at the wobble position (U34) of certain tRNAs, forming tRNA-cmnm(5)s(2)U34. This Pseudomonas putida (Arthrobacter siderocapsulatus) protein is tRNA uridine 5-carboxymethylaminomethyl modification enzyme MnmG.